Here is a 571-residue protein sequence, read N- to C-terminus: Phosphoenolpyruvate-protein phosphotransferase (571 aa).

The Tele-phosphohistidine intermediate role is filled by His-203. Phosphoenolpyruvate contacts are provided by Arg-306 and Arg-342. Positions 429 and 453 each coordinate Mg(2+). Phosphoenolpyruvate is bound by residues 452-453 (ND) and Arg-463. Cys-500 acts as the Proton donor in catalysis.

This sequence belongs to the PEP-utilizing enzyme family. Homodimer. It depends on Mg(2+) as a cofactor.

The protein resides in the cytoplasm. The catalysed reaction is L-histidyl-[protein] + phosphoenolpyruvate = N(pros)-phospho-L-histidyl-[protein] + pyruvate. Its function is as follows. General (non sugar-specific) component of the phosphoenolpyruvate-dependent sugar phosphotransferase system (sugar PTS). This major carbohydrate active-transport system catalyzes the phosphorylation of incoming sugar substrates concomitantly with their translocation across the cell membrane. Enzyme I transfers the phosphoryl group from phosphoenolpyruvate (PEP) to the phosphoryl carrier protein (HPr). The chain is Phosphoenolpyruvate-protein phosphotransferase (ptsI) from Chlamydia pneumoniae (Chlamydophila pneumoniae).